Reading from the N-terminus, the 494-residue chain is Ketol-acid reductoisomerase (NADP(+)) (494 aa).

The 195-residue stretch at 14–208 (LDQLGRCRFM…GGHRAGCLES (195 aa)) folds into the KARI N-terminal Rossmann domain. Residues 45–48 (CGAQ), Arg68, Arg76, Ser78, and 108–110 (DKQ) each bind NADP(+). Residue His132 is part of the active site. Gly158 provides a ligand contact to NADP(+). 2 consecutive KARI C-terminal knotted domains span residues 209 to 344 (SFVA…NYPE) and 345 to 487 (TDVE…MTDM). Positions 217, 221, 389, and 393 each coordinate Mg(2+). Substrate is bound at residue Ser414.

The protein belongs to the ketol-acid reductoisomerase family. It depends on Mg(2+) as a cofactor.

It catalyses the reaction (2R)-2,3-dihydroxy-3-methylbutanoate + NADP(+) = (2S)-2-acetolactate + NADPH + H(+). The enzyme catalyses (2R,3R)-2,3-dihydroxy-3-methylpentanoate + NADP(+) = (S)-2-ethyl-2-hydroxy-3-oxobutanoate + NADPH + H(+). It participates in amino-acid biosynthesis; L-isoleucine biosynthesis; L-isoleucine from 2-oxobutanoate: step 2/4. Its pathway is amino-acid biosynthesis; L-valine biosynthesis; L-valine from pyruvate: step 2/4. In terms of biological role, involved in the biosynthesis of branched-chain amino acids (BCAA). Catalyzes an alkyl-migration followed by a ketol-acid reduction of (S)-2-acetolactate (S2AL) to yield (R)-2,3-dihydroxy-isovalerate. In the isomerase reaction, S2AL is rearranged via a Mg-dependent methyl migration to produce 3-hydroxy-3-methyl-2-ketobutyrate (HMKB). In the reductase reaction, this 2-ketoacid undergoes a metal-dependent reduction by NADPH to yield (R)-2,3-dihydroxy-isovalerate. This Vibrio parahaemolyticus serotype O3:K6 (strain RIMD 2210633) protein is Ketol-acid reductoisomerase (NADP(+)).